A 147-amino-acid polypeptide reads, in one-letter code: Lysozyme C-1 (147 aa).

A signal peptide spans 1 to 18; the sequence is MKALLTLVFCLLPLAAQG. Residues 19–147 form the C-type lysozyme domain; that stretch reads KVYSRCELAA…VSKWIRGCRL (129 aa). 4 disulfides stabilise this stretch: cysteine 24/cysteine 145, cysteine 48/cysteine 133, cysteine 82/cysteine 98, and cysteine 94/cysteine 112. Catalysis depends on residues glutamate 53 and aspartate 70.

It belongs to the glycosyl hydrolase 22 family.

The protein localises to the secreted. It carries out the reaction Hydrolysis of (1-&gt;4)-beta-linkages between N-acetylmuramic acid and N-acetyl-D-glucosamine residues in a peptidoglycan and between N-acetyl-D-glucosamine residues in chitodextrins.. Functionally, lysozymes have primarily a bacteriolytic function; those in tissues and body fluids are associated with the monocyte-macrophage system and enhance the activity of immunoagents. The protein is Lysozyme C-1 of Anas platyrhynchos (Mallard).